A 341-amino-acid chain; its full sequence is Anthranilate phosphoribosyltransferase (341 aa).

Residues Gly-80, 83-84 (GD), Thr-88, 90-93 (NIST), 108-116 (KHGNRAVSS), and Ser-120 each bind 5-phospho-alpha-D-ribose 1-diphosphate. Gly-80 contacts anthranilate. Ser-92 is a binding site for Mg(2+). Anthranilate is bound at residue Asn-111. An anthranilate-binding site is contributed by Arg-166. Mg(2+) contacts are provided by Asp-225 and Glu-226.

The protein belongs to the anthranilate phosphoribosyltransferase family. As to quaternary structure, homodimer. It depends on Mg(2+) as a cofactor.

It carries out the reaction N-(5-phospho-beta-D-ribosyl)anthranilate + diphosphate = 5-phospho-alpha-D-ribose 1-diphosphate + anthranilate. Its pathway is amino-acid biosynthesis; L-tryptophan biosynthesis; L-tryptophan from chorismate: step 2/5. Catalyzes the transfer of the phosphoribosyl group of 5-phosphorylribose-1-pyrophosphate (PRPP) to anthranilate to yield N-(5'-phosphoribosyl)-anthranilate (PRA). The chain is Anthranilate phosphoribosyltransferase from Brevibacillus brevis (strain 47 / JCM 6285 / NBRC 100599).